Here is a 275-residue protein sequence, read N- to C-terminus: Urease accessory protein UreD (275 aa).

The protein belongs to the UreD family. UreD, UreF and UreG form a complex that acts as a GTP-hydrolysis-dependent molecular chaperone, activating the urease apoprotein by helping to assemble the nickel containing metallocenter of UreC. The UreE protein probably delivers the nickel.

Its subcellular location is the cytoplasm. Required for maturation of urease via the functional incorporation of the urease nickel metallocenter. The chain is Urease accessory protein UreD from Cereibacter sphaeroides (strain ATCC 17029 / ATH 2.4.9) (Rhodobacter sphaeroides).